The following is a 566-amino-acid chain: Chondroitin sulfate proteoglycan 5 (566 aa).

Positions 1-30 (MGRAGGGGPDWGPPPVLLLLGVTLVLTAGA) are cleaved as a signal peptide. Topologically, residues 31-423 (VPARETGSAI…SIITDFQVMC (393 aa)) are extracellular. Serine 38 carries an O-linked (Xyl...) (chondroitin sulfate) serine glycan. The tract at residues 56-93 (ANDTREEAGLPAAGEDETSWTERGSEMAAVGPGVGPEE) is disordered. A glycan (N-linked (GlcNAc...) asparagine) is linked at asparagine 57. O-linked (GalNAc...) threonine glycosylation is present at threonine 76. O-linked (Xyl...) (chondroitin sulfate) serine glycosylation is present at serine 123. An O-linked (GalNAc...) threonine glycan is attached at threonine 132. Disordered regions lie at residues 137 to 173 (DEALGSSTMPPAIPEATETSGPPSPAVHDKPSVGPEL), 218 to 249 (DSEGRGADMGSFPGSPGTSENHPDTEGETPSW), and 263 to 327 (ESDF…PPQH). The O-linked (GalNAc...) serine glycan is linked to serine 143. O-linked (GalNAc...) threonine glycosylation is found at threonine 144, threonine 153, and threonine 155. 2 O-linked (GalNAc...) serine glycosylation sites follow: serine 156 and serine 160. Over residues 163 to 173 (VHDKPSVGPEL) the composition is skewed to basic and acidic residues. The O-linked (GalNAc...) threonine glycan is linked to threonine 235. The tract at residues 265–301 (DFYPTTSFYDDLEEEEEEEEDKDTVGGGDLEDENDLL) is interaction with TNC and TNR. Residues 274-286 (DDLEEEEEEEEDK) show a composition bias toward acidic residues. Residues asparagine 355 and asparagine 367 are each glycosylated (N-linked (GlcNAc...) asparagine). The 43-residue stretch at 371–413 (RSVCDLFPSYCHNGGQCYLVENIGAFCRCNTQDYIWHKGMRCE) folds into the EGF-like domain. Disulfide bonds link cysteine 374–cysteine 387, cysteine 381–cysteine 397, and cysteine 399–cysteine 412. A phosphoserine mark is found at glycine 394 and phenylalanine 396. Phosphothreonine is present on cysteine 397. A helical transmembrane segment spans residues 424-444 (VAVGSAALVLLLLFMMTVFFA). An interaction with GOPC region spans residues 442–460 (FFAKKLYLLKTENTKLRRT). The Cytoplasmic portion of the chain corresponds to 445 to 566 (KKLYLLKTEN…GVNCLQNNLT (122 aa)). Phosphoserine is present on residues serine 467, serine 475, and serine 477. Threonine 478 bears the Phosphothreonine mark. Residues serine 483 and serine 543 each carry the phosphoserine modification. The segment at 531–566 (KEEESFNIQNSMSPKLEGGKGDQDDLGVNCLQNNLT) is disordered.

As to quaternary structure, binds TNR and probably TNC. Interacts with ERBB3 and GOPC. Interacts with MDK; this interaction is independent of the presence of chondroitin sulfate chains and promotes elongation of oligodendroglial precursor-like cells. Post-translationally, N-glycosylated. O-glycosylated; contains chondroitin sulfate glycans. Part-time proteoglycan, expressed in part as a proteoglycan exhibiting chondroitin sulfate glycans and in part as a non-proteoglycan form. The relative amount of both forms depends on tissues and tissue maturation. In the cerebellum the 2 forms coexist while in the cerebrum the proteoglycan form is predominant. In terms of processing, phosphorylated; in intracellular and extracellular parts. In terms of tissue distribution, expressed in olfactory bulb, hippocampus, brain stem, spinal cord, cerebrum and cerebellum. Expressed by Purkinje cells in the cerebellum (at protein level). Expressed in immature and mature cerebellum (isoform 1, isoform 2 and isoform 3).

The protein resides in the cell membrane. It localises to the synaptic cell membrane. The protein localises to the endoplasmic reticulum membrane. It is found in the golgi apparatus membrane. Its subcellular location is the cell surface. The protein resides in the secreted. In terms of biological role, may function as a growth and differentiation factor involved in neuritogenesis. May induce ERBB3 activation. The sequence is that of Chondroitin sulfate proteoglycan 5 (Cspg5) from Mus musculus (Mouse).